A 260-amino-acid polypeptide reads, in one-letter code: Thiazole synthase (260 aa).

Lys-102 functions as the Schiff-base intermediate with DXP in the catalytic mechanism. 1-deoxy-D-xylulose 5-phosphate contacts are provided by residues Gly-163, Ala-189–Gly-190, and Asn-211–Thr-212.

The protein belongs to the ThiG family. Homotetramer. Forms heterodimers with either ThiH or ThiS.

It is found in the cytoplasm. The enzyme catalyses [ThiS sulfur-carrier protein]-C-terminal-Gly-aminoethanethioate + 2-iminoacetate + 1-deoxy-D-xylulose 5-phosphate = [ThiS sulfur-carrier protein]-C-terminal Gly-Gly + 2-[(2R,5Z)-2-carboxy-4-methylthiazol-5(2H)-ylidene]ethyl phosphate + 2 H2O + H(+). Its pathway is cofactor biosynthesis; thiamine diphosphate biosynthesis. Its function is as follows. Catalyzes the rearrangement of 1-deoxy-D-xylulose 5-phosphate (DXP) to produce the thiazole phosphate moiety of thiamine. Sulfur is provided by the thiocarboxylate moiety of the carrier protein ThiS. In vitro, sulfur can be provided by H(2)S. The chain is Thiazole synthase from Geobacter sulfurreducens (strain ATCC 51573 / DSM 12127 / PCA).